We begin with the raw amino-acid sequence, 73 residues long: UPF0150 protein ssl0259 (73 aa).

Belongs to the UPF0150 family.

This chain is UPF0150 protein ssl0259, found in Synechocystis sp. (strain ATCC 27184 / PCC 6803 / Kazusa).